Reading from the N-terminus, the 410-residue chain is Mating-type locus allele B1 protein (410 aa).

A variable domain between B alleles region spans residues Met-1 to Cys-110. Residues Asp-107–His-184 constitute a DNA-binding region (homeobox; TALE-type). The tract at residues Arg-111–Val-410 is highly conserved between B alleles. Disordered regions lie at residues Arg-202–Pro-239, Thr-278–Leu-335, and Ala-374–Val-395. Positions Leu-205–Leu-233 are enriched in low complexity. Positions Lys-276–Arg-308 match the Nuclear localization signal motif. A compositionally biased stretch (basic residues) spans Ala-291–Ser-307. Residues Pro-312–Leu-335 show a composition bias toward polar residues. The segment at Pro-333–Val-410 is not essential for B1 function. Residues Arg-375 to Gly-388 are compositionally biased toward basic residues.

This sequence belongs to the TALE/M-ATYP homeobox family.

The protein resides in the nucleus. The B locus has at least 25 alleles, and any combination of two different B alleles yields a multimeric regulatory protein, that activates genes responsible for the pathogenicity and for the sexual development of the fungus within the corn plant. This is Mating-type locus allele B1 protein from Mycosarcoma maydis (Corn smut fungus).